The primary structure comprises 171 residues: 3-hydroxyanthranilate 3,4-dioxygenase (171 aa).

Position 45 (R45) interacts with O2. Positions 49, 55, and 93 each coordinate Fe cation. Substrate is bound at residue E55. Substrate contacts are provided by R97 and E107. 4 residues coordinate a divalent metal cation: C122, C125, C159, and C162.

Belongs to the 3-HAO family. Requires Fe(2+) as cofactor.

It is found in the cytoplasm. It catalyses the reaction 3-hydroxyanthranilate + O2 = (2Z,4Z)-2-amino-3-carboxymuconate 6-semialdehyde. It functions in the pathway cofactor biosynthesis; NAD(+) biosynthesis; quinolinate from L-kynurenine: step 3/3. Functionally, catalyzes the oxidative ring opening of 3-hydroxyanthranilate to 2-amino-3-carboxymuconate semialdehyde, which spontaneously cyclizes to quinolinate. The chain is 3-hydroxyanthranilate 3,4-dioxygenase from Candida albicans (strain SC5314 / ATCC MYA-2876) (Yeast).